Consider the following 1249-residue polypeptide: Hyphally regulated cell wall protein 3 (1249 aa).

The first 20 residues, 1-20 (MHLFKRIALTLWLIISSTLA), serve as a signal peptide directing secretion. The N-linked (GlcNAc...) asparagine glycan is linked to asparagine 373. The segment covering 383-415 (FPTTSQSSSSETVASSSQPDSSSTEPSAFPSST) has biased composition (low complexity). Disordered stretches follow at residues 383 to 729 (FPTT…SGII) and 883 to 1217 (GLST…SSAS). The segment covering 416–428 (GDSSAEPSITSDY) has biased composition (polar residues). Residues 429–716 (SSSELSVVPS…SEYTATWTTT (288 aa)) are compositionally biased toward low complexity. Asparagine 681 is a glycosylation site (N-linked (GlcNAc...) asparagine). 2 stretches are compositionally biased toward polar residues: residues 717 to 729 (NSDG…SGII) and 883 to 935 (GLST…PVPT). Asparagine 891, asparagine 940, asparagine 944, asparagine 948, asparagine 952, asparagine 956, asparagine 960, asparagine 966, asparagine 970, asparagine 974, asparagine 984, asparagine 988, asparagine 992, asparagine 996, asparagine 1000, asparagine 1010, asparagine 1014, asparagine 1018, asparagine 1022, asparagine 1026, asparagine 1032, asparagine 1046, asparagine 1050, asparagine 1058, asparagine 1062, asparagine 1072, asparagine 1076, asparagine 1080, asparagine 1086, asparagine 1090, asparagine 1094, asparagine 1098, asparagine 1114, asparagine 1118, asparagine 1122, asparagine 1128, asparagine 1132, asparagine 1136, asparagine 1140, asparagine 1150, asparagine 1154, asparagine 1158, asparagine 1172, asparagine 1180, and asparagine 1186 each carry an N-linked (GlcNAc...) asparagine glycan. Low complexity predominate over residues 941–959 (GSNNGSDNGSNNGSNNGSN). A compositionally biased stretch (gly residues) spans 960 to 982 (NGSGSGNGSNNGSNNGSGSGNGF). The span at 983–1043 (NNGSDNGSNN…SNSGSDSGNG (61 aa)) shows a compositional bias: low complexity. Positions 1062-1078 (NGSGSGGESNNGSGNGS) are enriched in gly residues. Residues 1079 to 1097 (DNGSSPDNGSNNGSNNGSN) show a composition bias toward low complexity. Residues 1139 to 1167 (NNGSNSGSNSDNGSNNSSGNGSSSDLGSV) are compositionally biased toward low complexity. 2 stretches are compositionally biased toward low complexity: residues 1175 to 1194 (NEGS…GAGA) and 1205 to 1217 (SPSA…SSAS). Residue asparagine 1225 is glycosylated (N-linked (GlcNAc...) asparagine). Asparagine 1225 carries GPI-anchor amidated asparagine lipidation. Positions 1226–1249 (GSGKLLNGKVLTLSVLSSMVVVFL) are cleaved as a propeptide — removed in mature form.

It belongs to the HYR1/IFF family. The GPI-anchor is attached to the protein in the endoplasmic reticulum and serves to target the protein to the cell surface. There, the glucosamine-inositol phospholipid moiety is cleaved off and the GPI-modified mannoprotein is covalently attached via its lipidless GPI glycan remnant to the 1,6-beta-glucan of the outer cell wall layer.

The protein localises to the secreted. It localises to the cell wall. Its subcellular location is the membrane. GPI-anchored cell wall protein involved in cell wall organization, hyphal growth, as well as in host-fungal interaction and virulence. The sequence is that of Hyphally regulated cell wall protein 3 (HYR3) from Candida albicans (strain SC5314 / ATCC MYA-2876) (Yeast).